A 955-amino-acid chain; its full sequence is Alpha-1,4 glucan phosphorylase L isozyme, chloroplastic/amyloplastic (955 aa).

Residues 1-43 (MSRLSGITPRARDDRSQFQNPRLEIAVPDRTAGLQRTKRTLLV) constitute a chloroplast transit peptide. The tract at residues 522-550 (KVVTESEKDELEEKDTELEKDEDPVPAPI) is disordered. A compositionally biased stretch (acidic residues) spans 528-545 (EKDELEEKDTELEKDEDP). Lys-801 is modified (N6-(pyridoxal phosphate)lysine).

The protein belongs to the glycogen phosphorylase family. It depends on pyridoxal 5'-phosphate as a cofactor.

Its subcellular location is the plastid. It localises to the chloroplast. The protein resides in the amyloplast. The catalysed reaction is [(1-&gt;4)-alpha-D-glucosyl](n) + phosphate = [(1-&gt;4)-alpha-D-glucosyl](n-1) + alpha-D-glucose 1-phosphate. Phosphorylase is an important allosteric enzyme in carbohydrate metabolism. Enzymes from different sources differ in their regulatory mechanisms and in their natural substrates. However, all known phosphorylases share catalytic and structural properties. In Ipomoea batatas (Sweet potato), this protein is Alpha-1,4 glucan phosphorylase L isozyme, chloroplastic/amyloplastic.